We begin with the raw amino-acid sequence, 121 residues long: Small ribosomal subunit protein uS13 (121 aa).

Positions 93 to 121 (RHLPVRGQNTKNNARTRKGPAVSIAGKKK) are disordered.

It belongs to the universal ribosomal protein uS13 family. As to quaternary structure, part of the 30S ribosomal subunit. Forms a loose heterodimer with protein S19. Forms two bridges to the 50S subunit in the 70S ribosome.

Located at the top of the head of the 30S subunit, it contacts several helices of the 16S rRNA. In the 70S ribosome it contacts the 23S rRNA (bridge B1a) and protein L5 of the 50S subunit (bridge B1b), connecting the 2 subunits; these bridges are implicated in subunit movement. Contacts the tRNAs in the A and P-sites. The sequence is that of Small ribosomal subunit protein uS13 from Ligilactobacillus salivarius (strain UCC118) (Lactobacillus salivarius).